The chain runs to 551 residues: High-affinity glucose transporter (551 aa).

Residues 1–27 are Cytoplasmic-facing; the sequence is MSLKNWLLLRDIQYEGTFYKKFPHVYN. A helical transmembrane segment spans residues 28–48; it reads IYVIGFIACISGLMFGFDIAS. Over 49 to 70 the chain is Extracellular; the sequence is MSSMIGTDVYKDYFSNPDSLTY. A helical membrane pass occupies residues 71–91; sequence GGITASMAGGSFLGSLISPNF. Residues 92 to 98 are Cytoplasmic-facing; that stretch reads SDAFGRK. Residues 99-119 form a helical membrane-spanning segment; it reads VSLHICAALWIIGAILQCAAQ. At 120 to 123 the chain is on the extracellular side; the sequence is DQAM. The chain crosses the membrane as a helical span at residues 124–144; the sequence is LIVGRVISGMGIGFGSSAAPV. Residues 145-155 lie on the Cytoplasmic side of the membrane; that stretch reads YCSEISPPKIR. Residues 156-176 traverse the membrane as a helical segment; that stretch reads GTISGLFQFSVTVGIMVLFYI. Residues 177–190 are Extracellular-facing; the sequence is GYGCHFIDGAAAFR. Residues 191–211 traverse the membrane as a helical segment; that stretch reads ITWGLQMVPGLILMVGVFFIP. The Cytoplasmic segment spans residues 212–289; it reads ESPRWLANHD…VGVSAQMWQQ (78 aa). A helical membrane pass occupies residues 290–310; that stretch reads LCGMNVMMYYIVYIFNMAGYT. The Extracellular segment spans residues 311 to 315; it reads GNTNL. A helical membrane pass occupies residues 316 to 336; the sequence is VASSIQYVLNVVMTIPALFLI. At 337 to 343 the chain is on the cytoplasmic side; it reads DKFGRRP. The helical transmembrane segment at 344 to 364 threads the bilayer; it reads VLIIGGIFMFTWLFSVAGILA. Residues 365–395 are Extracellular-facing; it reads TYSVPAPGGVNGDDTVTIQIPSENTSAANGV. Asn388 carries N-linked (GlcNAc...) asparagine glycosylation. A helical transmembrane segment spans residues 396 to 416; sequence IASSYLFVCFFAPTWGIGIWI. The Cytoplasmic portion of the chain corresponds to 417-432; it reads YCSEIFNNMERAKGSA. A helical transmembrane segment spans residues 433–453; the sequence is LSAATNWAFNFALAMFVPSAF. Residues 454-459 lie on the Extracellular side of the membrane; that stretch reads KNISWK. A helical transmembrane segment spans residues 460–480; that stretch reads TYIIFGVFSVALTIQTFFMFP. At 481–551 the chain is on the cytoplasmic side; that stretch reads ETKGKTLEEI…DRSDSASNSN (71 aa).

This sequence belongs to the major facilitator superfamily. Sugar transporter (TC 2.A.1.1) family.

Its subcellular location is the membrane. In terms of biological role, high-affinity glucose transporter. The chain is High-affinity glucose transporter (HGT1) from Kluyveromyces lactis (strain ATCC 8585 / CBS 2359 / DSM 70799 / NBRC 1267 / NRRL Y-1140 / WM37) (Yeast).